Consider the following 85-residue polypeptide: Small ribosomal subunit protein bS20 (85 aa).

Belongs to the bacterial ribosomal protein bS20 family.

In terms of biological role, binds directly to 16S ribosomal RNA. The chain is Small ribosomal subunit protein bS20 from Cytophaga hutchinsonii (strain ATCC 33406 / DSM 1761 / CIP 103989 / NBRC 15051 / NCIMB 9469 / D465).